Here is a 658-residue protein sequence, read N- to C-terminus: ATP-dependent RNA helicase DDX3Y (658 aa).

The interval 1–143 (MSQVAAESTA…DWSKPLPPSE (143 aa)) is disordered. Ser-2 is subject to N-acetylserine. Basic and acidic residues predominate over residues 45-69 (RNRETSKGVCDKDSSGWSCSKDKDA). Position 56 is an N6-acetyllysine (Lys-56). Phosphoserine is present on residues Ser-86 and Ser-90. A compositionally biased stretch (basic and acidic residues) spans 94-129 (GRFDDHGRNDYDGIGGRDRTGFGKFERSGHSRWSDR). Arg-101 is modified (omega-N-methylarginine). The residue at position 104 (Tyr-104) is a Phosphotyrosine. An Omega-N-methylarginine modification is found at Arg-110. Lys-117 bears the N6-acetyllysine mark. A phosphoserine mark is found at Ser-130 and Ser-182. The short motif at 179–207 (ENFSDIEMGEIIMGNIELTRYTRPTPVQK) is the Q motif element. Residue 199 to 206 (YTRPTPVQ) participates in ATP binding. A Helicase ATP-binding domain is found at 210 to 402 (IPIIKEKRDL…RDFLDEYIFL (193 aa)). Lys-214 is covalently cross-linked (Glycyl lysine isopeptide (Lys-Gly) (interchain with G-Cter in SUMO2)). An ATP-binding site is contributed by 223–230 (AQTGSGKT). The short motif at 346–349 (DEAD) is the DEAD box element. The region spanning 413-574 (NITQKVVWVE…EVPSWLESMA (162 aa)) is the Helicase C-terminal domain. Ser-455 is modified (phosphoserine). An Omega-N-methylarginine modification is found at Arg-590. Ser-592 and Ser-603 each carry phosphoserine. Residues 597 to 627 (ARDYRQSSGSANAGFNSNRANSSRSSGSSHN) form a disordered region. Residues 603–627 (SSGSANAGFNSNRANSSRSSGSSHN) show a composition bias toward low complexity. Residues Arg-615 and Arg-628 each carry the omega-N-methylarginine modification.

The protein belongs to the DEAD box helicase family. DDX3/DED1 subfamily. Found in heart, brain, liver, skeletal muscle, kidney and testis. Low expression detected in lung. In testis, expressed in all types of spermatogenic cells including spermatogonia, spermatocytes, spermatids and somatic Sertoli cells within the seminiferous tubules. Also expressed in Leydig cells and other interstitial cells.

The protein localises to the cytoplasm. Its subcellular location is the nucleus. The catalysed reaction is ATP + H2O = ADP + phosphate + H(+). Its function is as follows. Probable ATP-dependent RNA helicase. During immune response, may enhance IFNB1 expression via IRF3/IRF7 pathway. The sequence is that of ATP-dependent RNA helicase DDX3Y (Ddx3y) from Mus musculus (Mouse).